We begin with the raw amino-acid sequence, 67 residues long: ATP synthase F(0) complex subunit 8 (67 aa).

The helical transmembrane segment at 8–24 (TWFITITSMIMTLFILF) threads the bilayer. The residue at position 54 (lysine 54) is an N6-acetyllysine; alternate. Lysine 54 is modified (N6-succinyllysine; alternate). Lysine 57 is modified (N6-acetyllysine).

It belongs to the ATPase protein 8 family. As to quaternary structure, component of the ATP synthase complex composed at least of ATP5F1A/subunit alpha, ATP5F1B/subunit beta, ATP5MC1/subunit c (homooctomer), MT-ATP6/subunit a, MT-ATP8/subunit 8, ATP5ME/subunit e, ATP5MF/subunit f, ATP5MG/subunit g, ATP5MK/subunit k, ATP5MJ/subunit j, ATP5F1C/subunit gamma, ATP5F1D/subunit delta, ATP5F1E/subunit epsilon, ATP5PF/subunit F6, ATP5PB/subunit b, ATP5PD/subunit d, ATP5PO/subunit OSCP. ATP synthase complex consists of a soluble F(1) head domain (subunits alpha(3) and beta(3)) - the catalytic core - and a membrane F(0) domain - the membrane proton channel (subunits c, a, 8, e, f, g, k and j). These two domains are linked by a central stalk (subunits gamma, delta, and epsilon) rotating inside the F1 region and a stationary peripheral stalk (subunits F6, b, d, and OSCP). Interacts with PRICKLE3.

It is found in the mitochondrion membrane. Subunit 8, of the mitochondrial membrane ATP synthase complex (F(1)F(0) ATP synthase or Complex V) that produces ATP from ADP in the presence of a proton gradient across the membrane which is generated by electron transport complexes of the respiratory chain. ATP synthase complex consist of a soluble F(1) head domain - the catalytic core - and a membrane F(1) domain - the membrane proton channel. These two domains are linked by a central stalk rotating inside the F(1) region and a stationary peripheral stalk. During catalysis, ATP synthesis in the catalytic domain of F(1) is coupled via a rotary mechanism of the central stalk subunits to proton translocation. In vivo, can only synthesize ATP although its ATP hydrolase activity can be activated artificially in vitro. Part of the complex F(0) domain. This Sus scrofa (Pig) protein is ATP synthase F(0) complex subunit 8.